The sequence spans 429 residues: Glucose-1-phosphate adenylyltransferase (429 aa).

Alpha-D-glucose 1-phosphate is bound by residues Gly162, 177–178 (EK), and Ser209.

The protein belongs to the bacterial/plant glucose-1-phosphate adenylyltransferase family. In terms of assembly, homotetramer.

The enzyme catalyses alpha-D-glucose 1-phosphate + ATP + H(+) = ADP-alpha-D-glucose + diphosphate. Its pathway is glycan biosynthesis; glycogen biosynthesis. In terms of biological role, involved in the biosynthesis of ADP-glucose, a building block required for the elongation reactions to produce glycogen. Catalyzes the reaction between ATP and alpha-D-glucose 1-phosphate (G1P) to produce pyrophosphate and ADP-Glc. This chain is Glucose-1-phosphate adenylyltransferase, found in Gloeothece citriformis (strain PCC 7424) (Cyanothece sp. (strain PCC 7424)).